Here is a 479-residue protein sequence, read N- to C-terminus: B-cell CLL/lymphoma 6 member B protein (479 aa).

A BTB domain is found at 38–105; sequence TDVTLLVGGQ…MYTSRLRLSP (68 aa). 2 disordered regions span residues 143-190 and 210-259; these read RPLE…PDPK and GSLV…LSPT. The span at 147–160 shows a compositional bias: pro residues; that stretch reads AEPPTPPTAPPPGS. Residues 162–172 are compositionally biased toward basic and acidic residues; the sequence is RRSEGHPDPPT. Positions 234-244 are enriched in low complexity; it reads SSSSSSSSSSS. 5 C2H2-type zinc fingers span residues 328–350, 356–378, 384–406, 412–434, and 440–463; these read YKCQLCRSSFRYKGNLASHRTVH, YHCSICGARFNRPANLKTHSRIH, YKCETCGSRFVQVAHLRAHVLIH, YPCPTCGTRFRHLQTLKSHVRIH, and YHCDPCGLHFRHKSQLRLHLRQKH.

As to quaternary structure, associates with BCL6 through the BTB domain. Ubiquitously expressed with higher expression found in heart and placenta.

The protein localises to the nucleus. Functionally, acts as a sequence-specific transcriptional repressor in association with BCL6. May function in a narrow stage or be related to some events in the early B-cell development. The chain is B-cell CLL/lymphoma 6 member B protein (BCL6B) from Homo sapiens (Human).